The following is a 132-amino-acid chain: Agouti-signaling protein (132 aa).

An N-terminal signal peptide occupies residues 1-22; the sequence is MDVTRLLLATLLVFLCFFTVYS. N-linked (GlcNAc...) asparagine glycosylation is present at Asn-39. The segment at 62–88 is disordered; that stretch reads ISRKEAEKKRSSKKEASMKKVAQPRTP. A compositionally biased stretch (basic and acidic residues) spans 63–79; the sequence is SRKEAEKKRSSKKEASM. 5 cysteine pairs are disulfide-bonded: Cys-93–Cys-108, Cys-100–Cys-114, Cys-107–Cys-125, Cys-111–Cys-132, and Cys-116–Cys-123. The 40-residue stretch at 93–132 folds into the Agouti domain; the sequence is CVATRYSCKPPAPACCDPCASCQCRFFRSACSCRVLRLNC.

The protein resides in the secreted. Functionally, involved in the regulation of melanogenesis. The binding of ASP to MC1R precludes alpha-MSH initiated signaling and thus blocks production of cAMP, leading to a down-regulation of eumelanogenesis (brown/black pigment) and thus increasing synthesis of pheomelanin (yellow/red pigment). The polypeptide is Agouti-signaling protein (ASIP) (Semnopithecus entellus (Northern plains gray langur)).